The chain runs to 367 residues: Peptide chain release factor 2 (367 aa).

Q254 carries the N5-methylglutamine modification.

The protein belongs to the prokaryotic/mitochondrial release factor family. In terms of processing, methylated by PrmC. Methylation increases the termination efficiency of RF2.

Its subcellular location is the cytoplasm. In terms of biological role, peptide chain release factor 2 directs the termination of translation in response to the peptide chain termination codons UGA and UAA. In Leptospira borgpetersenii serovar Hardjo-bovis (strain JB197), this protein is Peptide chain release factor 2.